The primary structure comprises 93 residues: Putative pterin-4-alpha-carbinolamine dehydratase (93 aa).

The protein belongs to the pterin-4-alpha-carbinolamine dehydratase family.

It carries out the reaction (4aS,6R)-4a-hydroxy-L-erythro-5,6,7,8-tetrahydrobiopterin = (6R)-L-erythro-6,7-dihydrobiopterin + H2O. The sequence is that of Putative pterin-4-alpha-carbinolamine dehydratase from Synechococcus sp. (strain WH7803).